The following is a 259-amino-acid chain: Deoxyribose-phosphate aldolase (259 aa).

D102 serves as the catalytic Proton donor/acceptor. K167 acts as the Schiff-base intermediate with acetaldehyde in catalysis. K201 functions as the Proton donor/acceptor in the catalytic mechanism.

This sequence belongs to the DeoC/FbaB aldolase family. DeoC type 2 subfamily.

Its subcellular location is the cytoplasm. It catalyses the reaction 2-deoxy-D-ribose 5-phosphate = D-glyceraldehyde 3-phosphate + acetaldehyde. Its pathway is carbohydrate degradation; 2-deoxy-D-ribose 1-phosphate degradation; D-glyceraldehyde 3-phosphate and acetaldehyde from 2-deoxy-alpha-D-ribose 1-phosphate: step 2/2. Its function is as follows. Catalyzes a reversible aldol reaction between acetaldehyde and D-glyceraldehyde 3-phosphate to generate 2-deoxy-D-ribose 5-phosphate. The sequence is that of Deoxyribose-phosphate aldolase from Edwardsiella ictaluri (strain 93-146).